Here is a 734-residue protein sequence, read N- to C-terminus: Putative protocadherin beta-18 (734 aa).

Cadherin domains follow at residues 1-79 (MWKT…TPTF), 80-188 (LNNH…APEF), 189-293 (EKPV…PPEI), 294-398 (AMTS…APIF), and 399-508 (TQTS…SPFV). The N-linked (GlcNAc...) asparagine glycan is linked to Asn-115. Asn-365 and Asn-383 each carry an N-linked (GlcNAc...) asparagine glycan. Asn-514 carries an N-linked (GlcNAc...) asparagine glycan. Residues 515–621 (GSAPCTELVP…GFSQPYLPLT (107 aa)) enclose the Cadherin 6 domain. A helical transmembrane segment spans residues 638–658 (VVALASVSSLFLFSVFLFVAV).

It is found in the cell membrane. Its function is as follows. Potential calcium-dependent cell-adhesion protein. The protein is Putative protocadherin beta-18 (PCDHB18P) of Homo sapiens (Human).